Consider the following 147-residue polypeptide: Hemoglobin subunit beta (147 aa).

Valine 2 is subject to N-acetylvaline. In terms of domain architecture, Globin spans 3-147 (HLTPEEKNAV…VANALAHKYH (145 aa)). Threonine 13 carries the phosphothreonine modification. Serine 45 is subject to Phosphoserine. Lysine 60 is modified (N6-acetyllysine). Histidine 64 is a binding site for heme b. Residue lysine 83 is modified to N6-acetyllysine. A heme b-binding site is contributed by histidine 93. Cysteine 94 bears the S-nitrosocysteine mark. An N6-acetyllysine modification is found at lysine 145.

It belongs to the globin family. As to quaternary structure, heterotetramer of two alpha chains and two beta chains. As to expression, red blood cells.

Functionally, involved in oxygen transport from the lung to the various peripheral tissues. The polypeptide is Hemoglobin subunit beta (HBB) (Papio anubis (Olive baboon)).